Reading from the N-terminus, the 875-residue chain is Alanine--tRNA ligase (875 aa).

The Zn(2+) site is built by H564, H568, C666, and H670.

This sequence belongs to the class-II aminoacyl-tRNA synthetase family. As to quaternary structure, homotetramer. The cofactor is Zn(2+).

The protein localises to the cytoplasm. It catalyses the reaction tRNA(Ala) + L-alanine + ATP = L-alanyl-tRNA(Ala) + AMP + diphosphate. Its function is as follows. Catalyzes the attachment of alanine to tRNA(Ala) in a two-step reaction: alanine is first activated by ATP to form Ala-AMP and then transferred to the acceptor end of tRNA(Ala). Also edits incorrectly charged Ser-tRNA(Ala) and Gly-tRNA(Ala) via its editing domain. The polypeptide is Alanine--tRNA ligase (Pectobacterium atrosepticum (strain SCRI 1043 / ATCC BAA-672) (Erwinia carotovora subsp. atroseptica)).